The primary structure comprises 222 residues: Probable transcriptional regulator ycf29 (222 aa).

The Response regulatory domain maps to 4–120 (KLMLVENDIV…ELLSIINNLI (117 aa)). Asp-53 is subject to 4-aspartylphosphate. The HTH luxR-type domain maps to 139 to 204 (QLNHKIRLTP…LLVKYSINNN (66 aa)). The segment at residues 163–182 (NKEISTILNTSVRNVEKYVS) is a DNA-binding region (H-T-H motif).

It is found in the plastid. The protein resides in the chloroplast. In Pyropia yezoensis (Susabi-nori), this protein is Probable transcriptional regulator ycf29 (ycf29).